The chain runs to 434 residues: Histidinol dehydrogenase (434 aa).

The substrate site is built by Ser-242, Gln-264, and His-267. Zn(2+) is bound by residues Gln-264 and His-267. Catalysis depends on proton acceptor residues Glu-332 and His-333. His-333, Asp-366, Glu-420, and His-425 together coordinate substrate. Asp-366 is a binding site for Zn(2+). Residue His-425 participates in Zn(2+) binding.

Belongs to the histidinol dehydrogenase family. It depends on Zn(2+) as a cofactor.

The catalysed reaction is L-histidinol + 2 NAD(+) + H2O = L-histidine + 2 NADH + 3 H(+). It functions in the pathway amino-acid biosynthesis; L-histidine biosynthesis; L-histidine from 5-phospho-alpha-D-ribose 1-diphosphate: step 9/9. Catalyzes the sequential NAD-dependent oxidations of L-histidinol to L-histidinaldehyde and then to L-histidine. This chain is Histidinol dehydrogenase, found in Desulfotalea psychrophila (strain LSv54 / DSM 12343).